The following is a 136-amino-acid chain: Urease subunit beta (136 aa).

A disordered region spans residues 113-136; the sequence is NDEYAGVFGDNGAENVNKKGRKRS.

It belongs to the urease beta subunit family. In terms of assembly, heterotrimer of UreA (gamma), UreB (beta) and UreC (alpha) subunits. Three heterotrimers associate to form the active enzyme.

The protein localises to the cytoplasm. The enzyme catalyses urea + 2 H2O + H(+) = hydrogencarbonate + 2 NH4(+). The protein operates within nitrogen metabolism; urea degradation; CO(2) and NH(3) from urea (urease route): step 1/1. In Staphylococcus aureus (strain Newman), this protein is Urease subunit beta.